We begin with the raw amino-acid sequence, 213 residues long: Putative glutathione-dependent formaldehyde-activating enzyme (213 aa).

A CENP-V/GFA domain is found at 19-165 (FPGGTLKCLC…FRELGLETYD (147 aa)). Residues C26, C28, C47, C49, C52, C94, and C97 each coordinate Zn(2+).

The protein belongs to the Gfa family. It depends on Zn(2+) as a cofactor.

The enzyme catalyses S-(hydroxymethyl)glutathione = glutathione + formaldehyde. It functions in the pathway one-carbon metabolism; formaldehyde degradation; formate from formaldehyde (glutathione route): step 1/3. Catalyzes the condensation of formaldehyde and glutathione to S-hydroxymethylglutathione. This Podospora anserina (strain S / ATCC MYA-4624 / DSM 980 / FGSC 10383) (Pleurage anserina) protein is Putative glutathione-dependent formaldehyde-activating enzyme.